The chain runs to 206 residues: FMN-dependent NADH:quinone oxidoreductase (206 aa).

FMN-binding positions include 15-17 (SVS), 94-97 (MYNF), and 138-141 (TRGG).

This sequence belongs to the azoreductase type 1 family. As to quaternary structure, homodimer. FMN serves as cofactor.

It carries out the reaction 2 a quinone + NADH + H(+) = 2 a 1,4-benzosemiquinone + NAD(+). It catalyses the reaction N,N-dimethyl-1,4-phenylenediamine + anthranilate + 2 NAD(+) = 2-(4-dimethylaminophenyl)diazenylbenzoate + 2 NADH + 2 H(+). Functionally, quinone reductase that provides resistance to thiol-specific stress caused by electrophilic quinones. Its function is as follows. Also exhibits azoreductase activity. Catalyzes the reductive cleavage of the azo bond in aromatic azo compounds to the corresponding amines. The sequence is that of FMN-dependent NADH:quinone oxidoreductase from Rhizobium meliloti (strain 1021) (Ensifer meliloti).